Reading from the N-terminus, the 387-residue chain is Methylthioribose-1-phosphate isomerase (387 aa).

The Proton donor role is filled by Asp-257.

This sequence belongs to the eIF-2B alpha/beta/delta subunits family. MtnA subfamily.

It localises to the cytoplasm. The protein resides in the nucleus. The enzyme catalyses 5-(methylsulfanyl)-alpha-D-ribose 1-phosphate = 5-(methylsulfanyl)-D-ribulose 1-phosphate. It functions in the pathway amino-acid biosynthesis; L-methionine biosynthesis via salvage pathway; L-methionine from S-methyl-5-thio-alpha-D-ribose 1-phosphate: step 1/6. Its function is as follows. Catalyzes the interconversion of methylthioribose-1-phosphate (MTR-1-P) into methylthioribulose-1-phosphate (MTRu-1-P). The chain is Methylthioribose-1-phosphate isomerase (mri1) from Aspergillus fumigatus (strain CBS 144.89 / FGSC A1163 / CEA10) (Neosartorya fumigata).